The sequence spans 233 residues: Ion-translocating oxidoreductase complex subunit E (233 aa).

6 helical membrane passes run 18 to 38 (ALVQ…ATNA), 39 to 59 (LGLG…VSAL), 69 to 89 (IPIY…LINA), 92 to 112 (FGLY…CIVI), 128 to 148 (ALDG…LGAL), and 182 to 202 (PFLL…LLAG).

The protein belongs to the NqrDE/RnfAE family. As to quaternary structure, the complex is composed of six subunits: RnfA, RnfB, RnfC, RnfD, RnfE and RnfG.

It is found in the cell inner membrane. In terms of biological role, part of a membrane-bound complex that couples electron transfer with translocation of ions across the membrane. The chain is Ion-translocating oxidoreductase complex subunit E from Yersinia pestis bv. Antiqua (strain Angola).